The primary structure comprises 252 residues: Thiamine thiazole synthase (252 aa).

NAD(+) contacts are provided by residues Ser-35, 54 to 55, Gly-62, Val-126, and 152 to 154; these read EK and HVD. Residues Asp-154 and His-169 each coordinate Fe cation. Position 217 (Met-217) interacts with NAD(+). Position 227 (Arg-227) interacts with glycine.

This sequence belongs to the THI4 family. Homooctamer; tetramer of dimers. Requires Fe(2+) as cofactor.

The enzyme catalyses hydrogen sulfide + glycine + NAD(+) = ADP-5-ethyl-4-methylthiazole-2-carboxylate + nicotinamide + 3 H2O + H(+). It functions in the pathway cofactor biosynthesis; thiamine diphosphate biosynthesis. Its function is as follows. Involved in the biosynthesis of the thiazole moiety of thiamine. Catalyzes the conversion of NAD and glycine to adenosine diphosphate 5-(2-hydroxyethyl)-4-methylthiazole-2-carboxylate (ADT), an adenylated thiazole intermediate, using free sulfide as a source of sulfur. This is Thiamine thiazole synthase from Pyrococcus furiosus (strain ATCC 43587 / DSM 3638 / JCM 8422 / Vc1).